Here is a 22-residue protein sequence, read N- to C-terminus: Peptide PGLa-R1 (22 aa).

Residue Leu22 is modified to Leucine amide.

Expressed by the skin glands.

It is found in the secreted. Its function is as follows. Antimicrobial peptide. In Xenopus ruwenzoriensis (Uganda clawed frog), this protein is Peptide PGLa-R1.